Here is a 694-residue protein sequence, read N- to C-terminus: Elongation factor G (694 aa).

The 275-residue stretch at 8 to 282 (KDYRNIGIMA…AVIDYLPSPV (275 aa)) folds into the tr-type G domain. GTP is bound by residues 17–24 (AHIDAGKT), 81–85 (DTPGH), and 135–138 (NKMD).

It belongs to the TRAFAC class translation factor GTPase superfamily. Classic translation factor GTPase family. EF-G/EF-2 subfamily.

Its subcellular location is the cytoplasm. Catalyzes the GTP-dependent ribosomal translocation step during translation elongation. During this step, the ribosome changes from the pre-translocational (PRE) to the post-translocational (POST) state as the newly formed A-site-bound peptidyl-tRNA and P-site-bound deacylated tRNA move to the P and E sites, respectively. Catalyzes the coordinated movement of the two tRNA molecules, the mRNA and conformational changes in the ribosome. The protein is Elongation factor G of Mesomycoplasma hyopneumoniae (strain J / ATCC 25934 / NCTC 10110) (Mycoplasma hyopneumoniae).